Reading from the N-terminus, the 313-residue chain is Porphobilinogen deaminase (313 aa).

At C241 the chain carries S-(dipyrrolylmethanemethyl)cysteine.

It belongs to the HMBS family. Monomer. Dipyrromethane is required as a cofactor.

It carries out the reaction 4 porphobilinogen + H2O = hydroxymethylbilane + 4 NH4(+). Its pathway is porphyrin-containing compound metabolism; protoporphyrin-IX biosynthesis; coproporphyrinogen-III from 5-aminolevulinate: step 2/4. The protein operates within porphyrin-containing compound metabolism; chlorophyll biosynthesis. Tetrapolymerization of the monopyrrole PBG into the hydroxymethylbilane pre-uroporphyrinogen in several discrete steps. In Chlorobium luteolum (strain DSM 273 / BCRC 81028 / 2530) (Pelodictyon luteolum), this protein is Porphobilinogen deaminase.